The primary structure comprises 383 residues: Succinyl-diaminopimelate desuccinylase (383 aa).

Residue His73 coordinates Zn(2+). Asp75 is an active-site residue. Residue Asp107 coordinates Zn(2+). Glu141 serves as the catalytic Proton acceptor. Residues Glu142, Glu170, and His356 each coordinate Zn(2+).

The protein belongs to the peptidase M20A family. DapE subfamily. Homodimer. The cofactor is Zn(2+). Requires Co(2+) as cofactor.

It catalyses the reaction N-succinyl-(2S,6S)-2,6-diaminopimelate + H2O = (2S,6S)-2,6-diaminopimelate + succinate. Its pathway is amino-acid biosynthesis; L-lysine biosynthesis via DAP pathway; LL-2,6-diaminopimelate from (S)-tetrahydrodipicolinate (succinylase route): step 3/3. Catalyzes the hydrolysis of N-succinyl-L,L-diaminopimelic acid (SDAP), forming succinate and LL-2,6-diaminopimelate (DAP), an intermediate involved in the bacterial biosynthesis of lysine and meso-diaminopimelic acid, an essential component of bacterial cell walls. This chain is Succinyl-diaminopimelate desuccinylase, found in Pseudomonas aeruginosa (strain ATCC 15692 / DSM 22644 / CIP 104116 / JCM 14847 / LMG 12228 / 1C / PRS 101 / PAO1).